Consider the following 384-residue polypeptide: Mannitol-1-phosphate 5-dehydrogenase (384 aa).

3 to 14 contacts NAD(+); that stretch reads AVHFGAGNIGRG.

It belongs to the mannitol dehydrogenase family. As to quaternary structure, monomer.

The enzyme catalyses D-mannitol 1-phosphate + NAD(+) = beta-D-fructose 6-phosphate + NADH + H(+). The polypeptide is Mannitol-1-phosphate 5-dehydrogenase (mtlD) (Enterococcus faecalis (strain ATCC 700802 / V583)).